Reading from the N-terminus, the 129-residue chain is Large ribosomal subunit protein uL22 (129 aa).

Belongs to the universal ribosomal protein uL22 family. Part of the 50S ribosomal subunit.

In terms of biological role, this protein binds specifically to 23S rRNA; its binding is stimulated by other ribosomal proteins, e.g. L4, L17, and L20. It is important during the early stages of 50S assembly. It makes multiple contacts with different domains of the 23S rRNA in the assembled 50S subunit and ribosome. Its function is as follows. The globular domain of the protein is located near the polypeptide exit tunnel on the outside of the subunit, while an extended beta-hairpin is found that lines the wall of the exit tunnel in the center of the 70S ribosome. The protein is Large ribosomal subunit protein uL22 of Aster yellows witches'-broom phytoplasma (strain AYWB).